Here is a 337-residue protein sequence, read N- to C-terminus: S-adenosylmethionine:tRNA ribosyltransferase-isomerase (337 aa).

Belongs to the QueA family. In terms of assembly, monomer.

The protein localises to the cytoplasm. The enzyme catalyses 7-aminomethyl-7-carbaguanosine(34) in tRNA + S-adenosyl-L-methionine = epoxyqueuosine(34) in tRNA + adenine + L-methionine + 2 H(+). The protein operates within tRNA modification; tRNA-queuosine biosynthesis. Transfers and isomerizes the ribose moiety from AdoMet to the 7-aminomethyl group of 7-deazaguanine (preQ1-tRNA) to give epoxyqueuosine (oQ-tRNA). The sequence is that of S-adenosylmethionine:tRNA ribosyltransferase-isomerase from Legionella pneumophila subsp. pneumophila (strain Philadelphia 1 / ATCC 33152 / DSM 7513).